A 258-amino-acid polypeptide reads, in one-letter code: Deoxyribose-phosphate aldolase (258 aa).

D101 (proton donor/acceptor) is an active-site residue. K166 functions as the Schiff-base intermediate with acetaldehyde in the catalytic mechanism. K200 acts as the Proton donor/acceptor in catalysis.

This sequence belongs to the DeoC/FbaB aldolase family. DeoC type 2 subfamily.

Its subcellular location is the cytoplasm. The catalysed reaction is 2-deoxy-D-ribose 5-phosphate = D-glyceraldehyde 3-phosphate + acetaldehyde. It functions in the pathway carbohydrate degradation; 2-deoxy-D-ribose 1-phosphate degradation; D-glyceraldehyde 3-phosphate and acetaldehyde from 2-deoxy-alpha-D-ribose 1-phosphate: step 2/2. Functionally, catalyzes a reversible aldol reaction between acetaldehyde and D-glyceraldehyde 3-phosphate to generate 2-deoxy-D-ribose 5-phosphate. This Actinobacillus pleuropneumoniae serotype 7 (strain AP76) protein is Deoxyribose-phosphate aldolase.